The primary structure comprises 154 residues: UPF0178 protein GDI0551/Gdia_1457 (154 aa).

The protein belongs to the UPF0178 family.

This chain is UPF0178 protein GDI0551/Gdia_1457, found in Gluconacetobacter diazotrophicus (strain ATCC 49037 / DSM 5601 / CCUG 37298 / CIP 103539 / LMG 7603 / PAl5).